A 481-amino-acid chain; its full sequence is RAC-beta serine/threonine-protein kinase (481 aa).

Position 1 is an N-acetylmethionine (M1). The region spanning 5–108 (SVIKEGWLHK…WMRAIQMVAN (104 aa)) is the PH domain. S34 is subject to Phosphoserine. C60 and C77 are disulfide-bonded. S126 is subject to Phosphoserine. O-linked (GlcNAc) serine glycosylation is found at S128 and S131. The Protein kinase domain occupies 152–409 (FDYLKLLGKG…AKEVMEHRFF (258 aa)). Residues 158-166 (LGKGTFGKV) and K181 contribute to the ATP site. D275 (proton acceptor) is an active-site residue. Mn(2+) contacts are provided by N280 and D293. An intrachain disulfide couples C297 to C311. T306 carries O-linked (GlcNAc) threonine glycosylation. A Phosphothreonine; by PDPK1 modification is found at T309. T313 carries an O-linked (GlcNAc) threonine glycan. The 72-residue stretch at 410-481 (LSINWQDVVQ…QFSYSASIRE (72 aa)) folds into the AGC-kinase C-terminal domain. S447 is subject to Phosphoserine. Position 451 is a phosphothreonine (T451). Phosphoserine; by MTOR is present on residues S474 and S478. O-linked (GlcNAc) serine; alternate glycosylation is present at S474.

Belongs to the protein kinase superfamily. AGC Ser/Thr protein kinase family. RAC subfamily. In terms of assembly, interacts with BTBD10. Interacts with KCTD20. Interacts (via PH domain) with MTCP1, TCL1A and TCL1B; this interaction may facilitate AKT2 oligomerization and phosphorylation, hence increasing kinase activity. Interacts with PHB2; this interaction may be important for myogenic differentiation. Interacts (when phosphorylated) with CLIP3/ClipR-59; this interaction promotes cell membrane localization. Interacts with WDFY2 (via WD repeats 1-3). Post-translationally, phosphorylation on Thr-309 and Ser-474 is required for full activity. Phosphorylation of the activation loop at Thr-309 by PDPK1/PDK1 is a prerequisite for full activation. Phosphorylated and activated by PDPK1/PDK1 in the presence of phosphatidylinositol 3,4,5-trisphosphate. Phosphorylation by mTORC2 in response to growth factors plays a key role in AKT1 activation: mTORC2 phosphorylates different sites depending on the context, such as Ser-474 or Ser-478, thereby facilitating subsequent phosphorylation of the activation loop by PDPK1/PDK1. In terms of processing, ubiquitinated; undergoes both 'Lys-48'- and 'Lys-63'-linked polyubiquitination. TRAF6-induced 'Lys-63'-linked AKT2 ubiquitination. When fully phosphorylated and translocated into the nucleus, undergoes 'Lys-48'-polyubiquitination catalyzed by TTC3, leading to its degradation by the proteasome. O-GlcNAcylation at Thr-306 and Thr-313 inhibits activating phosphorylation at Thr-309 via disrupting the interaction between AKT and PDPK1/PDK1.

It localises to the cytoplasm. The protein resides in the nucleus. It is found in the cell membrane. The protein localises to the early endosome. It carries out the reaction L-seryl-[protein] + ATP = O-phospho-L-seryl-[protein] + ADP + H(+). The enzyme catalyses L-threonyl-[protein] + ATP = O-phospho-L-threonyl-[protein] + ADP + H(+). Two specific sites, one in the kinase domain (Thr-309) and the other in the C-terminal regulatory region (Ser-474), need to be phosphorylated for its full activation. AKT2 phosphorylation of PKP1 is induced by insulin. Inhibited by Akt inhibitor MK2206. Functionally, AKT2 is one of 3 closely related serine/threonine-protein kinases (AKT1, AKT2 and AKT3) called the AKT kinases, and which regulate many processes including metabolism, proliferation, cell survival, growth and angiogenesis. This is mediated through serine and/or threonine phosphorylation of a range of downstream substrates. Over 100 substrate candidates have been reported so far, but for most of them, no isoform specificity has been reported. AKT is responsible of the regulation of glucose uptake by mediating insulin-induced translocation of the SLC2A4/GLUT4 glucose transporter to the cell surface. Phosphorylation of PTPN1 at 'Ser-50' negatively modulates its phosphatase activity preventing dephosphorylation of the insulin receptor and the attenuation of insulin signaling. Phosphorylation of TBC1D4 triggers the binding of this effector to inhibitory 14-3-3 proteins, which is required for insulin-stimulated glucose transport. AKT also regulates the storage of glucose in the form of glycogen by phosphorylating GSK3A at 'Ser-21' and GSK3B at 'Ser-9', resulting in inhibition of its kinase activity. Phosphorylation of GSK3 isoforms by AKT is also thought to be one mechanism by which cell proliferation is driven. AKT also regulates cell survival via the phosphorylation of MAP3K5 (apoptosis signal-related kinase). Phosphorylation of 'Ser-83' decreases MAP3K5 kinase activity stimulated by oxidative stress and thereby prevents apoptosis. AKT mediates insulin-stimulated protein synthesis by phosphorylating TSC2 at 'Ser-939' and 'Thr-1462', thereby activating mTORC1 signaling and leading to both phosphorylation of 4E-BP1 and in activation of RPS6KB1. AKT is involved in the phosphorylation of members of the FOXO factors (Forkhead family of transcription factors), leading to binding of 14-3-3 proteins and cytoplasmic localization. In particular, FOXO1 is phosphorylated at 'Thr-24', 'Ser-256' and 'Ser-319'. FOXO3 and FOXO4 are phosphorylated on equivalent sites. AKT has an important role in the regulation of NF-kappa-B-dependent gene transcription and positively regulates the activity of CREB1 (cyclic AMP (cAMP)-response element binding protein). The phosphorylation of CREB1 induces the binding of accessory proteins that are necessary for the transcription of pro-survival genes such as BCL2 and MCL1. AKT phosphorylates 'Ser-454' on ATP citrate lyase (ACLY), thereby potentially regulating ACLY activity and fatty acid synthesis. Activates the 3B isoform of cyclic nucleotide phosphodiesterase (PDE3B) via phosphorylation of 'Ser-273', resulting in reduced cyclic AMP levels and inhibition of lipolysis. Phosphorylates PIKFYVE on 'Ser-318', which results in increased PI(3)P-5 activity. The Rho GTPase-activating protein DLC1 is another substrate and its phosphorylation is implicated in the regulation cell proliferation and cell growth. AKT plays a role as key modulator of the AKT-mTOR signaling pathway controlling the tempo of the process of newborn neurons integration during adult neurogenesis, including correct neuron positioning, dendritic development and synapse formation. Signals downstream of phosphatidylinositol 3-kinase (PI(3)K) to mediate the effects of various growth factors such as platelet-derived growth factor (PDGF), epidermal growth factor (EGF), insulin and insulin-like growth factor I (IGF-I). AKT mediates the antiapoptotic effects of IGF-I. Essential for the SPATA13-mediated regulation of cell migration and adhesion assembly and disassembly. May be involved in the regulation of the placental development. In response to lysophosphatidic acid stimulation, inhibits the ciliogenesis cascade. In this context, phosphorylates WDR44, hence stabilizing its interaction with Rab11 and preventing the formation of the ciliogenic Rab11-FIP3-RAB3IP complex. Also phosphorylates RAB3IP/Rabin8, thus may affect RAB3IP guanine nucleotide exchange factor (GEF) activity toward Rab8, which is important for cilia growth. Phosphorylates PKP1, facilitating its interaction with YWHAG and translocation to the nucleus, ultimately resulting in a reduction in keratinocyte intercellular adhesion. Phosphorylation of PKP1 increases PKP1 protein stability, translocation to the cytoplasm away from desmosome plaques and PKP1-driven cap-dependent translation. Its function is as follows. Several AKT2-specific substrates have been identified, including ANKRD2, C2CD5, CLK2 and PITX2. May play a role in myoblast differentiation. In this context, may act through PITX2 phosphorylation. Unphosphorylated PITX2 associates with an ELAVL1/HuR-containing complex, which stabilizes cyclin mRNA and ensuring cell proliferation. Phosphorylation by AKT2 impairs this association, leading to CCND1 mRNA destabilization and progression towards differentiation. Also involved in the negative regulation of myogenesis in response to stress conditions. In this context, acts by phosphorylating ANKRD2. May also be a key regulator of glucose uptake. Regulates insulin-stimulated glucose transport by the increase of glucose transporter GLUT4 translocation from intracellular stores to the plasma membrane. In this context, acts by phosphorylating C2CD5/CDP138 on 'Ser-197' in insulin-stimulated adipocytes. Through the phosphorylation of CLK2 on 'Thr-343', involved in insulin-regulated suppression of hepatic gluconeogenesis. In Mus musculus (Mouse), this protein is RAC-beta serine/threonine-protein kinase (Akt2).